A 487-amino-acid polypeptide reads, in one-letter code: MDHDDFDSVSWRHGPDSDISRPTTSGTDTAESPETRRDPNGKRRMSSASEIPQAGPHADALDLAGIGDGVLECRVDTPIKENDGTKDAYISYLVTTHTDFKSFQKADFTVRRRFTDFVFLYKTLYREYPACAVPPLPDKHKMEYVRGDRFGAEFTTRRAWSLHRFLKRLTLHPVLRRAPLLAIFLESPDWNAHMRLRGSRASTSGSDGGGTGIFDNFTDTFVNAFTKVHKPDRRFIEVREKADKLDEDLTHVEKIVARVARREADLETDYNDLATQFRKLVPLEPEVEVPLQVFAASVEETARGIKNLKDHTDQNYLGSLRDMEAYILSVKSLLKTREQKQLDFEALVDYRNKAVAERDSLAANPSSYYASNPLTSSPASFIRSKMEDMRGVDHEQSRRERMRKLELRIDELTREVESAKTTSEMFDEEVVREVADFERIKAIEFRDSLGALAEQHIEFYQGVLNTWERFVAEMEEEQSTGDAHPNA.

Residues 1–59 (MDHDDFDSVSWRHGPDSDISRPTTSGTDTAESPETRRDPNGKRRMSSASEIPQAGPHAD) are disordered. Over residues 20 to 32 (SRPTTSGTDTAES) the composition is skewed to polar residues. In terms of domain architecture, PX spans 70–192 (VLECRVDTPI…IFLESPDWNA (123 aa)). Positions 113, 115, 139, and 158 each coordinate a 1,2-diacyl-sn-glycero-3-phospho-(1D-myo-inositol-3-phosphate). Residues 395–430 (EQSRRERMRKLELRIDELTREVESAKTTSEMFDEEV) adopt a coiled-coil conformation.

Belongs to the sorting nexin family.

It is found in the cytoplasm. The protein resides in the cytosol. It localises to the preautophagosomal structure membrane. The protein localises to the endosome membrane. Its function is as follows. Sorting nexin, involved in the separation or division of vacuoles throughout the entire life cycle of the cells. Involved in retrieval of late-Golgi SNAREs from post-Golgi endosomes to the trans-Golgi network, for cytoplasm to vacuole transport (Cvt), and autophagy of large cargos including mitophagy, pexophagy and glycophagy. This Emericella nidulans (strain FGSC A4 / ATCC 38163 / CBS 112.46 / NRRL 194 / M139) (Aspergillus nidulans) protein is Sorting nexin-4 (snx4).